The sequence spans 460 residues: MTOR-associated protein MEAK7 (460 aa).

The region spanning 246–414 (SLLDLPAVMH…IHTVEVWAVG (169 aa)) is the TLDc domain.

It localises to the membrane. It is found in the cytoplasm. Its subcellular location is the lysosome. Functionally, activates an alternative mTOR signaling to regulate cell proliferation and migration. The chain is MTOR-associated protein MEAK7 (meak7) from Xenopus laevis (African clawed frog).